A 351-amino-acid chain; its full sequence is Ribosomal RNA small subunit methyltransferase H (351 aa).

S-adenosyl-L-methionine-binding positions include 48 to 50 (GGY), aspartate 67, phenylalanine 94, aspartate 115, and glutamine 122. A disordered region spans residues 298-351 (GPVLPSEAETEVNPRARSAKLRAGERTDGPAPPPLSAIETLASLPAPQGRGTRR).

This sequence belongs to the methyltransferase superfamily. RsmH family.

The protein localises to the cytoplasm. The catalysed reaction is cytidine(1402) in 16S rRNA + S-adenosyl-L-methionine = N(4)-methylcytidine(1402) in 16S rRNA + S-adenosyl-L-homocysteine + H(+). Specifically methylates the N4 position of cytidine in position 1402 (C1402) of 16S rRNA. The protein is Ribosomal RNA small subunit methyltransferase H of Methylorubrum populi (strain ATCC BAA-705 / NCIMB 13946 / BJ001) (Methylobacterium populi).